Here is a 1060-residue protein sequence, read N- to C-terminus: Anoctamin-8 (1060 aa).

A disordered region spans residues M1–S32. A2 is subject to N-acetylalanine. The Cytoplasmic segment spans residues A2–K244. The span at E14–P23 shows a compositional bias: basic and acidic residues. A helical transmembrane segment spans residues I245–F265. The Extracellular portion of the chain corresponds to G266–D281. A helical membrane pass occupies residues V282 to W302. The Cytoplasmic portion of the chain corresponds to K303–Q356. S318 is subject to Phosphoserine. The helical transmembrane segment at L357–G377 threads the bilayer. At C378–K400 the chain is on the extracellular side. A helical transmembrane segment spans residues V401–L421. The Cytoplasmic portion of the chain corresponds to N422–L437. Residues I438–F458 traverse the membrane as a helical segment. Over Y459 to E745 the chain is Extracellular. Disordered regions lie at residues A529–D605, G619–M640, A653–T672, and G680–Q723. Gly residues predominate over residues G534–G547. Acidic residues-rich tracts occupy residues P549–A559 and E581–S602. S665 is modified (phosphoserine). Residues G680 to E694 show a composition bias toward basic and acidic residues. N-linked (GlcNAc...) asparagine glycosylation is present at N708. A helical membrane pass occupies residues M746 to C766. At A767–K802 the chain is on the cytoplasmic side. Position 796 is a phosphoserine (S796). A helical transmembrane segment spans residues V803–G823. The Extracellular portion of the chain corresponds to Q824 to A836. A helical membrane pass occupies residues A837–V857. Residues A858 to P1060 are Cytoplasmic-facing. The segment at H884–P1060 is disordered. Basic and acidic residues-rich tracts occupy residues R899–A927 and V935–R950. The segment covering T972–S986 has biased composition (pro residues). R991 is modified (asymmetric dimethylarginine; alternate). Position 991 is an omega-N-methylarginine; alternate (R991). R999 carries the post-translational modification Omega-N-methylarginine. The span at P1049 to P1060 shows a compositional bias: basic and acidic residues.

Belongs to the anoctamin family. As to expression, predominant expression seen in epithelial tissues.

It localises to the cell membrane. Its function is as follows. Does not exhibit calcium-activated chloride channel (CaCC) activity. This is Anoctamin-8 (Ano8) from Mus musculus (Mouse).